Here is a 344-residue protein sequence, read N- to C-terminus: NADH-quinone oxidoreductase subunit H 2 (344 aa).

8 helical membrane-spanning segments follow: residues 13–33, 82–102, 116–136, 161–181, 188–208, 240–260, 280–300, and 319–339; these read LPIL…VAWL, ILFL…WAVI, ALLY…LAGW, MGFA…GEIV, FWHW…ISGV, LFFL…ALMF, VPGI…YLWF, and VFIP…VAQL.

It belongs to the complex I subunit 1 family. NDH-1 is composed of 14 different subunits. Subunits NuoA, H, J, K, L, M, N constitute the membrane sector of the complex.

It is found in the cell inner membrane. The catalysed reaction is a quinone + NADH + 5 H(+)(in) = a quinol + NAD(+) + 4 H(+)(out). In terms of biological role, NDH-1 shuttles electrons from NADH, via FMN and iron-sulfur (Fe-S) centers, to quinones in the respiratory chain. The immediate electron acceptor for the enzyme in this species is believed to be ubiquinone. Couples the redox reaction to proton translocation (for every two electrons transferred, four hydrogen ions are translocated across the cytoplasmic membrane), and thus conserves the redox energy in a proton gradient. This subunit may bind ubiquinone. The chain is NADH-quinone oxidoreductase subunit H 2 from Nitrosococcus oceani (strain ATCC 19707 / BCRC 17464 / JCM 30415 / NCIMB 11848 / C-107).